Here is a 163-residue protein sequence, read N- to C-terminus: MEKRILGLDPGLAILGFGAITCTPGLTQLQSTKVNVLDFGVIKTSADIEIGQRLCTLFDDLHTVIDQLQPDVVAIEKLFFYRMSSTIVVAQARGVVMLALAQHHLPYVEFTPAQIKLALTGYGNADKSEVQEAVARELDLAEIPRPDDAADALAVALTAWYQM.

Residues aspartate 9, glutamate 76, and aspartate 148 contribute to the active site. Aspartate 9, glutamate 76, and aspartate 148 together coordinate Mg(2+).

It belongs to the RuvC family. Homodimer which binds Holliday junction (HJ) DNA. The HJ becomes 2-fold symmetrical on binding to RuvC with unstacked arms; it has a different conformation from HJ DNA in complex with RuvA. In the full resolvosome a probable DNA-RuvA(4)-RuvB(12)-RuvC(2) complex forms which resolves the HJ. Mg(2+) serves as cofactor.

Its subcellular location is the cytoplasm. The catalysed reaction is Endonucleolytic cleavage at a junction such as a reciprocal single-stranded crossover between two homologous DNA duplexes (Holliday junction).. Functionally, the RuvA-RuvB-RuvC complex processes Holliday junction (HJ) DNA during genetic recombination and DNA repair. Endonuclease that resolves HJ intermediates. Cleaves cruciform DNA by making single-stranded nicks across the HJ at symmetrical positions within the homologous arms, yielding a 5'-phosphate and a 3'-hydroxyl group; requires a central core of homology in the junction. The consensus cleavage sequence is 5'-(A/T)TT(C/G)-3'. Cleavage occurs on the 3'-side of the TT dinucleotide at the point of strand exchange. HJ branch migration catalyzed by RuvA-RuvB allows RuvC to scan DNA until it finds its consensus sequence, where it cleaves and resolves the cruciform DNA. The chain is Crossover junction endodeoxyribonuclease RuvC from Nostoc sp. (strain PCC 7120 / SAG 25.82 / UTEX 2576).